We begin with the raw amino-acid sequence, 684 residues long: Chaperone protein HtpG (684 aa).

Residues 1 to 329 form an a; substrate-binding region; that stretch reads MSKKGTIGVT…SPDIPLNVSR (329 aa). The interval 330–548 is b; the sequence is SYLQSDANVK…FMRRMRDMAQ (219 aa). The interval 549 to 684 is c; the sequence is LQPGMSFYGE…EFIRRSQRLL (136 aa).

Belongs to the heat shock protein 90 family. Homodimer.

The protein resides in the cytoplasm. In terms of biological role, molecular chaperone. Has ATPase activity. This is Chaperone protein HtpG from Porphyromonas gingivalis (strain ATCC BAA-308 / W83).